The sequence spans 188 residues: Adenylate kinase (188 aa).

Residue 12 to 17 (GVGKGT) participates in ATP binding. Positions 32-61 (STGDIFRSAMANHTELGDKAKSFMDAGNLV) are NMP. AMP is bound by residues Thr-33, Arg-38, 59 to 61 (NLV), 89 to 92 (GYPR), and Gln-96. The segment at 130 to 136 (GRGREDD) is LID. Arg-131 contacts ATP. AMP contacts are provided by Arg-133 and Arg-144. Residue Gly-172 coordinates ATP.

The protein belongs to the adenylate kinase family. As to quaternary structure, monomer.

The protein resides in the cytoplasm. It catalyses the reaction AMP + ATP = 2 ADP. It participates in purine metabolism; AMP biosynthesis via salvage pathway; AMP from ADP: step 1/1. Its function is as follows. Catalyzes the reversible transfer of the terminal phosphate group between ATP and AMP. Plays an important role in cellular energy homeostasis and in adenine nucleotide metabolism. The protein is Adenylate kinase of Oenococcus oeni (strain ATCC BAA-331 / PSU-1).